The primary structure comprises 314 residues: F-box protein AUF2 (314 aa).

One can recognise an F-box domain in the interval 1 to 49 (MDVFDGLPDPIIVDILNKVGDVKTLLRCSSLSKRFNSLVPQSESLTLRL).

As to quaternary structure, part of a SCF (ASK-cullin-F-box) protein ligase complex.

The protein localises to the nucleus. It participates in protein modification; protein ubiquitination. In terms of biological role, component of SCF(ASK-cullin-F-box) E3 ubiquitin ligase complexes, which may mediate the ubiquitination and subsequent proteasomal degradation of target proteins. The protein is F-box protein AUF2 of Arabidopsis thaliana (Mouse-ear cress).